The sequence spans 846 residues: ATR-interacting protein mus304 (846 aa).

Disordered regions lie at residues 20–40 (DVSV…FDGI), 90–109 (QGST…QKKP), and 135–162 (EPQK…KTTT). Low complexity predominate over residues 144 to 162 (TSTSRITTSSISVQQKTTT). Coiled coils occupy residues 168–240 (ATQS…LADE) and 327–359 (EYSE…LQAK). The EEXXXDL motif motif lies at 504-510 (EELLFDL). The tract at residues 651–681 (GAVQGSVSNGSTSASVSNPNQNSNSSTTQRG) is disordered. A compositionally biased stretch (low complexity) spans 655–676 (GSVSNGSTSASVSNPNQNSNSS).

This sequence belongs to the ATRIP family. In terms of assembly, interacts with ATR/mei-41. In terms of tissue distribution, highly expressed in the oocyte and nurse cells from stage 5 onward and in embryos prior to during nuclear division 14. Then, it decreases to background levels during interphase 14. Weakly or not expressed in stage embryos and imaginal disks.

Its subcellular location is the cytoplasm. DNA damage checkpoint protein required for chromosome break repair and for genomic stability during development. In Drosophila melanogaster (Fruit fly), this protein is ATR-interacting protein mus304 (mus304).